Here is a 156-residue protein sequence, read N- to C-terminus: Cellulose synthase operon protein D (156 aa).

The protein operates within glycan metabolism; bacterial cellulose biosynthesis. May have a major role in the perfection of crystallization, involved either in the pore structure itself or in the organization of the pores within the linear array of terminal synthesizing complexes (TCs). The chain is Cellulose synthase operon protein D (bcsDI) from Komagataeibacter xylinus (Gluconacetobacter xylinus).